The sequence spans 712 residues: MCSPASPKILYRNPRFLRLAFLQLHHQQQSDVFCDVLLQAEGEAVPAHCCILSACSPFFTERLERERPAQGGKVVLELGGLKISTLRKLVDFLYTSEMEVSQEEAQDVLSAARQLRVSELESLQLEGGKLVKAPQGRRLNRECLQPTSAAPISARVVTPSHHPHTPLPTNQTPCPLGAIRLKSLGKEEGPQENNRQNADNLSGTLLLKRKARACPTPQEKNSSPSSHSQEPRENKNDTALDPTVLSPPSLYPSVDKHLLPRKIRLSRSKPSPGICTSKPSSILSGSSSVPATPGRRLWRQRSVNKETPEDKPKPGRASPLQSTPNPSGLGKTGGSRKRSPEVRAPNSDSAEEGQVGRVKLRKIVNGTCWEVVQETPLKNTQDSPQIPDPGGDFQEPSGTQPFSSNEQEMSPTRTELCQDSPMCTKLQDILVSASHSPDHPVVKSEFESSPELVEKEPMLAIDCREPYAFDTALLEQPCEAEEYRITSAAATSELEEILDFMLCGSDIEPPIGSLESPGAEGCRTPTYHLTETGKNWIEGEEWCLPDMELWPRELTELEKEPAGENRGPTELLSPLVMPSEVSEVLSVGGRWTPDLEITSSQPLDGQEDKLLHVSSLDTPQRSYGDLSPPCSNWVETGLEVSLTTDELLYPSPKAGKEVSGHSELLGSLPASSEEEEIDVVDWTAEGRLVPTTVPSVWPDPSSESETEVDILT.

The BTB domain maps to cysteine 34–glutamine 102. Disordered regions lie at residues valine 157–leucine 176, arginine 212–valine 355, and glutamate 374–serine 410. Polar residues predominate over residues glutamine 218 to serine 228. Residues glutamine 229–threonine 238 are compositionally biased toward basic and acidic residues. Residues serine 277–serine 288 are compositionally biased toward low complexity. A compositionally biased stretch (basic and acidic residues) spans valine 303–lysine 313. The segment covering proline 396–serine 410 has biased composition (polar residues). Phosphoserine is present on residues serine 420, serine 671, and serine 672. Disordered stretches follow at residues lysine 653 to glutamate 676 and threonine 691 to threonine 712. The span at serine 702 to threonine 712 shows a compositional bias: acidic residues.

Its subcellular location is the nucleus. Functionally, specifically required during spermatogenesis to promote expression of piRNA precursors. The piRNA metabolic process mediates the repression of transposable elements during meiosis by forming complexes composed of piRNAs and Piwi proteins and governs the methylation and subsequent repression of transposons, which is essential for the germline integrity. Acts by facilitating transcription elongation at piRNA loci during pachytene. This chain is BTB/POZ domain-containing protein 18, found in Homo sapiens (Human).